Reading from the N-terminus, the 1404-residue chain is DNA-directed RNA polymerase subunit beta' (1404 aa).

Zn(2+) contacts are provided by Cys-70, Cys-72, Cys-85, and Cys-88. Mg(2+) is bound by residues Asp-460, Asp-462, and Asp-464. The Zn(2+) site is built by Cys-814, Cys-888, Cys-895, and Cys-898.

The protein belongs to the RNA polymerase beta' chain family. The RNAP catalytic core consists of 2 alpha, 1 beta, 1 beta' and 1 omega subunit. When a sigma factor is associated with the core the holoenzyme is formed, which can initiate transcription. Requires Mg(2+) as cofactor. It depends on Zn(2+) as a cofactor.

The catalysed reaction is RNA(n) + a ribonucleoside 5'-triphosphate = RNA(n+1) + diphosphate. In terms of biological role, DNA-dependent RNA polymerase catalyzes the transcription of DNA into RNA using the four ribonucleoside triphosphates as substrates. This is DNA-directed RNA polymerase subunit beta' from Buchnera aphidicola subsp. Baizongia pistaciae (strain Bp).